A 689-amino-acid chain; its full sequence is Ribonuclease J (689 aa).

The segment at 1–88 (MTDNNQNNEN…RNYAQEELDS (88 aa)) is disordered. Basic and acidic residues predominate over residues 9–24 (ENHENSSENSKADEMR). Basic residues predominate over residues 56–78 (HHKKEHRPNKKPNNHHKQKHAKT). An N6-acetyllysine mark is found at lysine 132 and lysine 138. Residues histidine 206, histidine 208, aspartate 210, histidine 211, histidine 275, and aspartate 297 each contribute to the Zn(2+) site. 3 positions are modified to N6-acetyllysine: lysine 321, lysine 335, and lysine 395. 498 to 502 (HVSGH) provides a ligand contact to substrate. An N6-acetyllysine modification is found at lysine 509. Histidine 524 is a binding site for Zn(2+). An N6-acetyllysine mark is found at lysine 545, lysine 632, and lysine 647.

It belongs to the metallo-beta-lactamase superfamily. RNA-metabolizing metallo-beta-lactamase-like family. Bacterial RNase J subfamily. In terms of assembly, homodimer. Homotetramer; dimer of homodimers. Interacts with RNA helicase RhpA, might be a member of a minimal RNA degradosome complex. Zn(2+) serves as cofactor. Post-translationally, acetylated on nine lysine residues. Some of the residues are acetylated by multiple different mechanisms. RimL is partially responsible for the acetylation of Lys-321, Lys-395 and Lys-647. HPB8_1270 homolog is partially responsible for the acetylation of Lys-321, Lys-395, Lys-509 and Lys-647. Acetyl-phosphate-mediated non-enzymatic acetylation pathway takes part in the acetylation of Lys-132, Lys-321, Lys-395, Lys-509 and Lys-647. Acetylation of the remaining residues Lys-138, Lys-335, Lys-545 and Lys-632 occurs by a yet undetermined mechanism. Acetylation on a number of these residues is important for growth regulation and proper cell morphology.

It localises to the cytoplasm. Its activity is regulated as follows. Catalytic activity is regulated by the balance between homodimers and homotetramers, with homotetramers being the active forms of this enzyme. Acetylation allosterically regulates the homooligomerization state and hence the catalytic activity. In terms of biological role, an RNase that has 5'-3' exoribonuclease and endoribonuclease activity. Degrades 5'-monophosphorylated ssRNA and dsRNA, considerably more active on ssRNA. Association with RhpA significantly increases the dsRNase activity. Degrades RNA substrate with hairpin structures at both ends with low activity, but presence of RhpA significantly increases the activity on this substrate. Stimulates ATPase activity of RNA helicase RhpA. Involved in stabilization of mRNA but apparently not rRNA. This chain is Ribonuclease J, found in Helicobacter pylori (strain ATCC 700392 / 26695) (Campylobacter pylori).